We begin with the raw amino-acid sequence, 397 residues long: Elongation factor Tu-1 (397 aa).

The 197-residue stretch at 10–206 (KPHVNIGTIG…AVDESIPEPE (197 aa)) folds into the tr-type G domain. The G1 stretch occupies residues 19–26 (GHIDHGKT). Position 19–26 (19–26 (GHIDHGKT)) interacts with GTP. A Mg(2+)-binding site is contributed by T26. Residues 62 to 66 (GITIS) form a G2 region. The segment at 83-86 (DCPG) is G3. Residues 83–87 (DCPGH) and 138–141 (NKAD) each bind GTP. Residues 138–141 (NKAD) are G4. The segment at 176 to 178 (SAL) is G5.

The protein belongs to the TRAFAC class translation factor GTPase superfamily. Classic translation factor GTPase family. EF-Tu/EF-1A subfamily. Monomer.

The protein resides in the cytoplasm. The enzyme catalyses GTP + H2O = GDP + phosphate + H(+). Its function is as follows. GTP hydrolase that promotes the GTP-dependent binding of aminoacyl-tRNA to the A-site of ribosomes during protein biosynthesis. In Streptomyces ramocissimus, this protein is Elongation factor Tu-1.